Here is a 171-residue protein sequence, read N- to C-terminus: 3-hydroxydecanoyl-[acyl-carrier-protein] dehydratase (171 aa).

The active site involves His70.

This sequence belongs to the thioester dehydratase family. FabA subfamily. In terms of assembly, homodimer.

It is found in the cytoplasm. It carries out the reaction a (3R)-hydroxyacyl-[ACP] = a (2E)-enoyl-[ACP] + H2O. The enzyme catalyses (3R)-hydroxydecanoyl-[ACP] = (2E)-decenoyl-[ACP] + H2O. The catalysed reaction is (2E)-decenoyl-[ACP] = (3Z)-decenoyl-[ACP]. The protein operates within lipid metabolism; fatty acid biosynthesis. Necessary for the introduction of cis unsaturation into fatty acids. Catalyzes the dehydration of (3R)-3-hydroxydecanoyl-ACP to E-(2)-decenoyl-ACP and then its isomerization to Z-(3)-decenoyl-ACP. Can catalyze the dehydratase reaction for beta-hydroxyacyl-ACPs with saturated chain lengths up to 16:0, being most active on intermediate chain length. The protein is 3-hydroxydecanoyl-[acyl-carrier-protein] dehydratase of Xanthomonas euvesicatoria pv. vesicatoria (strain 85-10) (Xanthomonas campestris pv. vesicatoria).